Reading from the N-terminus, the 143-residue chain is Large ribosomal subunit protein uL11 (143 aa).

This sequence belongs to the universal ribosomal protein uL11 family. Part of the ribosomal stalk of the 50S ribosomal subunit. Interacts with L10 and the large rRNA to form the base of the stalk. L10 forms an elongated spine to which L12 dimers bind in a sequential fashion forming a multimeric L10(L12)X complex. One or more lysine residues are methylated.

Its function is as follows. Forms part of the ribosomal stalk which helps the ribosome interact with GTP-bound translation factors. In Polynucleobacter necessarius subsp. necessarius (strain STIR1), this protein is Large ribosomal subunit protein uL11.